Here is a 679-residue protein sequence, read N- to C-terminus: Glycine--tRNA ligase beta subunit (679 aa).

The protein belongs to the class-II aminoacyl-tRNA synthetase family. Tetramer of two alpha and two beta subunits.

It localises to the cytoplasm. It carries out the reaction tRNA(Gly) + glycine + ATP = glycyl-tRNA(Gly) + AMP + diphosphate. In Streptococcus pyogenes serotype M28 (strain MGAS6180), this protein is Glycine--tRNA ligase beta subunit.